We begin with the raw amino-acid sequence, 299 residues long: Protein phosphatase 1 regulatory subunit 3D (299 aa).

The tract at residues M1 to R22 is disordered. Residues S23, S25, and S28 each carry the phosphoserine modification. The segment at E37–R94 is disordered. Over residues P44 to A56 the composition is skewed to pro residues. The span at P57–I67 shows a compositional bias: low complexity. At S74 the chain carries Phosphoserine. Residues A85–R94 show a composition bias toward low complexity. The PP1-binding motif signature appears at L101–R104. S133 bears the Phosphoserine mark. One can recognise a CBM21 domain in the interval G169–T278.

Interacts with PPP1CC catalytic subunit of PP1, and associates with glycogen. Interacts with EPM2A; in the presence of NHLC1/malin the interaction leads to PPP1R3D ubiquitination and autophagic degradation. Expressed in all tissues tested. High expression in skeletal muscle and heart.

Seems to act as a glycogen-targeting subunit for PP1. PP1 is essential for cell division, and participates in the regulation of glycogen metabolism, muscle contractility and protein synthesis. The protein is Protein phosphatase 1 regulatory subunit 3D (PPP1R3D) of Homo sapiens (Human).